Here is a 270-residue protein sequence, read N- to C-terminus: Co-chaperone protein DjlA (270 aa).

Residues 1–6 (MNWIGK) lie on the Periplasmic side of the membrane. A helical transmembrane segment spans residues 7–30 (LIGMMLGFILAGPIGLIIGLFIGH). The Cytoplasmic segment spans residues 31–270 (VVFDQGRFRQ…EQIRKVRSMV (240 aa)). The region spanning 204 to 270 (DAYKVLGLTS…EQIRKVRSMV (67 aa)) is the J domain.

In terms of assembly, homodimer.

It is found in the cell inner membrane. Functionally, regulatory DnaK co-chaperone. Direct interaction between DnaK and DjlA is needed for the induction of the wcaABCDE operon, involved in the synthesis of a colanic acid polysaccharide capsule, possibly through activation of the RcsB/RcsC phosphotransfer signaling pathway. The colanic acid capsule may help the bacterium survive conditions outside the host. This chain is Co-chaperone protein DjlA, found in Coxiella burnetii (strain RSA 493 / Nine Mile phase I).